A 119-amino-acid polypeptide reads, in one-letter code: Large ribosomal subunit protein bL20 (119 aa).

Belongs to the bacterial ribosomal protein bL20 family.

Its function is as follows. Binds directly to 23S ribosomal RNA and is necessary for the in vitro assembly process of the 50S ribosomal subunit. It is not involved in the protein synthesizing functions of that subunit. This Herminiimonas arsenicoxydans protein is Large ribosomal subunit protein bL20.